The sequence spans 497 residues: Putative glucuronosyltransferase PGSIP8 (497 aa).

Residues 3–23 (LQRGFVFLSLVLSFMIIETTA) form a helical membrane-spanning segment. Mn(2+)-binding residues include Asp165 and Asp167. The next 5 membrane-spanning stretches (helical) occupy residues 319-339 (YSAEMPLVIIQAMFYLGIIVV), 365-385 (GFKLIALLSVVAAYIFPFFTI), 388-408 (TIHPLIGWSLYLMASFALSSI), 418-438 (LPVLTPWLGILGTLLVMAFPW), and 442-462 (GVVRALSVFAYAFCCAPFVWV).

The protein belongs to the glycosyltransferase 8 family. Glycogenin subfamily. Mn(2+) serves as cofactor.

The protein localises to the membrane. The chain is Putative glucuronosyltransferase PGSIP8 (PGSIP8) from Arabidopsis thaliana (Mouse-ear cress).